We begin with the raw amino-acid sequence, 405 residues long: Lariat debranching enzyme (405 aa).

Residues cysteine 11, histidine 13, aspartate 40, and asparagine 85 each contribute to the a divalent metal cation site. The lariat recognition loop stretch occupies residues 125-159; the sequence is SGIWKEWDFNKQRPDWNDLENNNWKANIRNLYHVR. A divalent metal cation-binding residues include histidine 179, histidine 231, and histidine 233. Residues 242–277 form a disordered region; sequence HNKRSHEPPNKSTSKTKKNNNEIDLDLSSDEDERSG. Residues 264 to 274 show a composition bias toward acidic residues; that stretch reads IDLDLSSDEDE. Position 269 is a phosphoserine (serine 269).

It belongs to the lariat debranching enzyme family. Requires Fe(2+) as cofactor. The cofactor is Zn(2+). Mn(2+) is required as a cofactor.

It localises to the nucleus. Its subcellular location is the cytoplasm. With respect to regulation, active in presence of diverse metals including Fe(2+), Zn(2+) and Mn(2+). Binds two metal cations in two adjacent alpha and beta metal-binding pockets. The activity is the highest with Fe(2+) bound to the 2 metal-binding sites. Activity is low with Zn(2+) and Mn(2+). Functionally, cleaves the 2'-5' phosphodiester linkage at the branch point of lariat intron pre-mRNAs after splicing and converts them into linear molecules that are subsequently degraded, thereby facilitating ribonucleotide turnover. It also participates in Ty1 retrovirus-like transposition via an RNA lariat intermediate in cDNA synthesis. This chain is Lariat debranching enzyme (DBR1), found in Saccharomyces cerevisiae (strain ATCC 204508 / S288c) (Baker's yeast).